We begin with the raw amino-acid sequence, 525 residues long: MGDVSELKMQITPETPGRIPVLNPFESPSDYSNLHEQTLASPSIFKSTKLPTPGKFRWSIDQLAIINPVEIDPEEIHRQASYLRLSRIDKDVEDKRQKAIEEFFTKDVIVPSPWTDHDGKQPSELHPSKCLSSHDDSPDGKKPSLPSQKCNAACQTLLSLPVDFNLEAILGDYFREEDFVAHTPGNLSSSSLRRKLFLDGNGSICDPLPSPSPGSPPCSARGSLEGQFSSSPIQNSVKKYSLGSVTTSPSAISSPTFSPIALQGGKTPLSEPRKLTFHSPEASCATASTGIVNPSIRSPYIDGCSPIKNWSPRRLRGGPQCLSSLVRIPFTLEAHSEDEEADVSCTGAAPLSTNACGEPRVVTAMSVTQSHSGIAEKERAVLDDAESERENDTVDMVDPTDTVAESTWIKEPVDDGNSPMTDSASGIAFSIENSHMCMSPLAESSVLPYESSAIQMNSDYNTQTCVSNITDIVGTERYCKENVTHTNVPVPFEVEMKSQVNNVTPGHTAQRCWMKSPRPSQCSRP.

The interval 114 to 146 (WTDHDGKQPSELHPSKCLSSHDDSPDGKKPSLP) is disordered. The span at 115-142 (TDHDGKQPSELHPSKCLSSHDDSPDGKK) shows a compositional bias: basic and acidic residues. Serine 191, serine 250, serine 305, and serine 311 each carry phosphoserine. Arginine 316 is modified (omega-N-methylarginine). Threonine 331 is subject to Phosphothreonine. Positions 505–525 (PGHTAQRCWMKSPRPSQCSRP) are disordered.

Belongs to the BORA family. Interacts with AURKA. In terms of processing, phosphorylated by AURKA.

Its function is as follows. Required for the activation of AURKA at the onset of mitosis. This Mus musculus (Mouse) protein is Protein aurora borealis (Bora).